The following is a 713-amino-acid chain: Fibroblast growth factor receptor 4 (713 aa).

The first 20 residues, 1-20 (MLPLWLVLAGLLLAVGPAAS), serve as a signal peptide directing secretion. The tract at residues 21–54 (HRGEMEPDSLASGDDDEDSDGDGPHGDRSEEPVY) is disordered. The Extracellular portion of the chain corresponds to 21-281 (HRGEMEPDSL…AETSEAKYTD (261 aa)). Residues 42–54 (DGPHGDRSEEPVY) are compositionally biased toward basic and acidic residues. Ig-like C2-type domains follow at residues 59–152 (PYWT…YLLD) and 161–261 (PILQ…AWLT). Cys84 and Cys136 form a disulfide bridge. Asn133, Asn170, Asn202, Asn223, and Asn234 each carry an N-linked (GlcNAc...) asparagine glycan. Cys183 and Cys245 are oxidised to a cystine. Residues 282-302 (IIIYTSGSLAVAMALIIVVLC) form a helical membrane-spanning segment. At 303–713 (RMQTQSSKQP…CLFSCPSGRT (411 aa)) the chain is on the cytoplasmic side. Residues 379–667 (LVLGKPLGEG…ILAAISEEYL (289 aa)) form the Protein kinase domain. ATP contacts are provided by residues 385–393 (LGEGCFGQV) and Lys415. The active-site Proton acceptor is the Asp524. Phosphotyrosine; by autocatalysis occurs at positions 554, 555, and 666.

Belongs to the protein kinase superfamily. Tyr protein kinase family. Fibroblast growth factor receptor subfamily. As to quaternary structure, monomer. Homodimer after ligand binding. Interacts with FGF1, FGF2, FGF4, FGF6, FGF8, FGF9, FGF16, FGF17, FGF18, FGF19, FGF21 and FGF23 (in vitro). Binding affinity for FGF family members is enhanced by interactions between FGFs and heparan sulfate proteoglycans. Interacts with KLB; this strongly increases the affinity for FGF19 and FGF23. Affinity for FGF19 is strongly increased by KLB and sulfated glycosaminoglycans. KLB and KL both interact with the core-glycosylated FGFR4 in the endoplasmic reticulum and promote its degradation, so that only FGFR4 with fully mature N-glycans is expressed at the cell surface. Identified in a complex with NCAM1, CDH2, PLCG1, FRS2, SRC, SHC1, GAP43 and CTTN. Interacts with MMP14 and HIP1. Interacts with STAT3. N-glycosylated. Full maturation of the glycan chains in the Golgi is essential for high affinity interaction with FGF19. Post-translationally, ubiquitinated. Subject to proteasomal degradation when not fully glycosylated. In terms of processing, autophosphorylated. Binding of FGF family members together with heparan sulfate proteoglycan or heparin promotes receptor dimerization and autophosphorylation on tyrosine residues. Autophosphorylation occurs in trans between the two FGFR molecules present in the dimer.

Its subcellular location is the cell membrane. It is found in the endosome. The protein resides in the endoplasmic reticulum. It catalyses the reaction L-tyrosyl-[protein] + ATP = O-phospho-L-tyrosyl-[protein] + ADP + H(+). With respect to regulation, present in an inactive conformation in the absence of bound ligand. Ligand binding leads to dimerization and activation by autophosphorylation on tyrosine residues. Functionally, tyrosine-protein kinase that acts as a cell-surface receptor for fibroblast growth factors and plays a role in the regulation of cell proliferation, differentiation and migration, and in regulation of lipid metabolism, bile acid biosynthesis, glucose uptake, vitamin D metabolism and phosphate homeostasis. Required for normal down-regulation of the expression of CYP7A1, the rate-limiting enzyme in bile acid synthesis, in response to FGF19. Phosphorylates PLCG1 and FRS2. Ligand binding leads to the activation of several signaling cascades. Activation of PLCG1 leads to the production of the cellular signaling molecules diacylglycerol and inositol 1,4,5-trisphosphate. Phosphorylation of FRS2 triggers recruitment of GRB2, GAB1, PIK3R1 and SOS1, and mediates activation of RAS, MAPK1/ERK2, MAPK3/ERK1 and the MAP kinase signaling pathway, as well as of the AKT1 signaling pathway. Promotes SRC-dependent phosphorylation of the matrix protease MMP14 and its lysosomal degradation. FGFR4 signaling is down-regulated by receptor internalization and degradation; MMP14 promotes internalization and degradation of FGFR4. This Coturnix coturnix (Common quail) protein is Fibroblast growth factor receptor 4 (FGFR4).